The sequence spans 99 residues: MRSLTLAALLLCSLLLVFHTSAAEELQAQEGHLMIPGDTDTALETVDDERLFECTFECDIKKEGKPCKPKGCKCDDKDNKDHKKCSGGWRCKLKLCLKI.

A signal peptide spans 1 to 23; the sequence is MRSLTLAALLLCSLLLVFHTSAA. Residues 24-50 constitute a propeptide that is removed on maturation; sequence EELQAQEGHLMIPGDTDTALETVDDER. Disulfide bonds link C54–C67, C58–C91, C72–C74, and C85–C96.

This sequence belongs to the neurotoxin 12 (Hwtx-2) family. 04 (lasiotoxin) subfamily. Expressed by the venom gland.

The protein localises to the secreted. Its function is as follows. Toxin that causes irreversible contractile paralysis into adult Aedes aegypti resulting in 100% mortality after 24 hours. The polypeptide is U1-theraphotoxin-Lsp1b (Lasiodora sp. (strain IBSP 8539) (Brazilian salmon pink birdeater)).